A 538-amino-acid chain; its full sequence is MAGGGGGGGGVAPPLKHDGLEPHPVKDQLSSISYCITSPPPWPEAILLGFQHYLVMLGTTVLIPTYLVPQMGGGNEEKAKMVQTLLFVSGLNTLLQSFFGTRLPAVIGGSYTYVPTTLSIILAGRYSDILDPQEKFKRIMRGIQGALIVASILQIVVGFSGLWRNVVRLLSPLSAVPLVALAGFGLYEHGFPLLAKCIEIGLPEIILLLLFSQYIPHLIRGERQVFHRFAVIFSVVIVWIYAHLLTVGGAYKNTGVNTQTSCRTDRSGLISGSPWIRVPYPFQWGPPTFHAGEAFAMMAVSFVSLIESTGTYIVVSRFASATPPPPSVLSRGVGWQGVGVLLCGLFGAGNGASVSVENAGLLALTRVGSRRVVQISAGFMIFFSILGKFGAIFASIPAPVVAALHCLFFAYVGAGGLSLLQFCNLNSFRTKFILGFSVFMGLSIPQYFNQYTAVNKYGPVHTHARWFNDMINVPFSSKAFVAGILAFFLDVTMSSKDSATRKDRGMFWWDRFMSFKSDTRSEEFYSLPFNLNKYFPSV.

A compositionally biased stretch (gly residues) spans 1 to 11 (MAGGGGGGGGV). The interval 1–20 (MAGGGGGGGGVAPPLKHDGL) is disordered. A run of 12 helical transmembrane segments spans residues 45-65 (AILLGFQHYLVMLGTTVLIPT), 81-101 (MVQTLLFVSGLNTLLQSFFGT), 103-123 (LPAVIGGSYTYVPTTLSIILA), 143-163 (IQGALIVASILQIVVGFSGLW), 166-186 (VVRLLSPLSAVPLVALAGFGL), 191-211 (FPLLAKCIEIGLPEIILLLLF), 229-249 (FAVIFSVVIVWIYAHLLTVGG), 295-315 (FAMMAVSFVSLIESTGTYIVV), 372-394 (VVQISAGFMIFFSILGKFGAIFA), 398-420 (APVVAALHCLFFAYVGAGGLSLL), 432-452 (FILGFSVFMGLSIPQYFNQYT), and 471-491 (INVPFSSKAFVAGILAFFLDV).

This sequence belongs to the nucleobase:cation symporter-2 (NCS2) (TC 2.A.40) family. As to expression, expressed exclusively in ovules.

It is found in the cell membrane. This Arabidopsis thaliana (Mouse-ear cress) protein is Nucleobase-ascorbate transporter 7 (NAT7).